Reading from the N-terminus, the 424-residue chain is MSVKWEKQEGNEGVLTVEVDAETFNKALDDAFKKVVKQVSIPGFRKGKVPRGLFEQRFGVESLYQDALDILLPVEYPKAIDEAGIDPVDRPEIDVEKIEKGESLIFTAKVTVKPEVKLGDYKGLNVEKDDATVTDEDVQEELKGMQNRQAELVVKEEGAIENGDTVVLDFEGFVDGEAFEGGKAENYSLEVGSGSFIPGFEEQLVGLEAGAEKDVEVTFPEEYHAEDLAGKPAVFKVKIHEIKAKELPALDDEFAKDVDEEVETLAELTEKTKKRLEEAKENEAEGKLREELVEKASENAEVDIPQAMVDTELDRMMKEFEQRLQMQGMNLELYFQFSGQDEDALKEQMKEDAAKRVKSNLTLEAIAAAENLQVSDEEVEEELSKMAEAYNMPIENIKQAIGSTEAMKEDLKVRKAIDFLVENR.

A PPIase FKBP-type domain is found at 163 to 248 (GDTVVLDFEG…IHEIKAKELP (86 aa)).

This sequence belongs to the FKBP-type PPIase family. Tig subfamily.

It is found in the cytoplasm. The catalysed reaction is [protein]-peptidylproline (omega=180) = [protein]-peptidylproline (omega=0). In terms of biological role, involved in protein export. Acts as a chaperone by maintaining the newly synthesized protein in an open conformation. Functions as a peptidyl-prolyl cis-trans isomerase. The polypeptide is Trigger factor (Bacillus pumilus (strain SAFR-032)).